The primary structure comprises 134 residues: Arsenate reductase 1 (134 aa).

Catalysis depends on nucleophile residues cysteine 11, cysteine 83, and cysteine 90. 2 disulfide bridges follow: cysteine 11–cysteine 83 and cysteine 83–cysteine 90.

The protein belongs to the low molecular weight phosphotyrosine protein phosphatase family. Thioredoxin-coupled ArsC subfamily.

It localises to the cytoplasm. It carries out the reaction arsenate + [thioredoxin]-dithiol + H(+) = arsenite + [thioredoxin]-disulfide + H2O. Catalyzes the reduction of arsenate [As(V)] to arsenite [As(III)]. This Bacillus cereus (strain ATCC 10987 / NRS 248) protein is Arsenate reductase 1.